Consider the following 126-residue polypeptide: Fluoride-specific ion channel FluC (126 aa).

4 helical membrane-spanning segments follow: residues 4–24 (ILAI…IGLW), 35–55 (YGTF…LTLI), 68–88 (MLVT…YESF), and 100–120 (IGYM…GVGL). 2 residues coordinate Na(+): Gly75 and Thr78.

It belongs to the fluoride channel Fluc/FEX (TC 1.A.43) family.

The protein localises to the cell membrane. The enzyme catalyses fluoride(in) = fluoride(out). Na(+) is not transported, but it plays an essential structural role and its presence is essential for fluoride channel function. Its function is as follows. Fluoride-specific ion channel. Important for reducing fluoride concentration in the cell, thus reducing its toxicity. This chain is Fluoride-specific ion channel FluC, found in Chloroflexus aurantiacus (strain ATCC 29366 / DSM 635 / J-10-fl).